A 512-amino-acid chain; its full sequence is Sodium/proline symporter (512 aa).

Helical transmembrane passes span tryptophan 16 to glycine 36, isoleucine 54 to methionine 74, leucine 85 to valine 105, isoleucine 139 to serine 159, phenylalanine 174 to alanine 194, phenylalanine 200 to asparagine 220, isoleucine 247 to isoleucine 267, isoleucine 286 to phenylalanine 306, valine 327 to serine 347, phenylalanine 381 to tryptophan 401, leucine 410 to leucine 430, alanine 438 to isoleucine 458, and isoleucine 467 to valine 487.

This sequence belongs to the sodium:solute symporter (SSF) (TC 2.A.21) family.

The protein localises to the cell membrane. It catalyses the reaction L-proline(in) + Na(+)(in) = L-proline(out) + Na(+)(out). Its function is as follows. Catalyzes the sodium-dependent uptake of extracellular L-proline. Since most S.aureus strains are L-proline auxotrophs, this transporter may aid the bacterial persistence during an infection of tissues with low proline concentrations. This Staphylococcus aureus (strain USA300) protein is Sodium/proline symporter (putP).